We begin with the raw amino-acid sequence, 1747 residues long: Retroelement silencing factor 1 (1747 aa).

A Glycyl lysine isopeptide (Lys-Gly) (interchain with G-Cter in SUMO2) cross-link involves residue K216. At S221 the chain carries Phosphoserine. Over residues 261-272 the composition is skewed to polar residues; it reads TSAVPSQQYATQ. Positions 261 to 280 are disordered; sequence TSAVPSQQYATQTDKRPPPP. K707 participates in a covalent cross-link: Glycyl lysine isopeptide (Lys-Gly) (interchain with G-Cter in SUMO2). 3 disordered regions span residues 833–856, 923–956, and 1073–1101; these read PLTQ…NVNQ, PQKP…GFQK, and EGSV…KDPA. The span at 842 to 856 shows a compositional bias: polar residues; sequence ESTNGNSEVTPNVNQ. The span at 937–956 shows a compositional bias: basic and acidic residues; the sequence is REPEKQLDNTTENKDFGFQK. Residues 1073–1087 show a composition bias toward polar residues; that stretch reads EGSVGQQTTYQTSED. A compositionally biased stretch (basic and acidic residues) spans 1089–1101; sequence TADKTSSDSKDPA. A Glycyl lysine isopeptide (Lys-Gly) (interchain with G-Cter in SUMO2) cross-link involves residue K1136. S1145 carries the post-translational modification Phosphoserine. A disordered region spans residues 1200–1274; the sequence is EEKQKEQCSP…KSLPRTEQEL (75 aa). Residues 1217-1226 show a composition bias toward basic and acidic residues; sequence QGERTSDRDV. A Phosphothreonine modification is found at T1240. Positions 1242–1261 are enriched in basic and acidic residues; the sequence is PDGKSHFPELQDDSRKDTPK. The residue at position 1358 (S1358) is a Phosphoserine. Residues K1528 and K1636 each participate in a glycyl lysine isopeptide (Lys-Gly) (interchain with G-Cter in SUMO2) cross-link. Positions 1686–1716 are disordered; sequence KRTQKDSQERDNVNSRLSKRSFSADGFEMLQ. Residues 1689–1698 are compositionally biased toward basic and acidic residues; it reads QKDSQERDNV. A Phosphoserine modification is found at S1708. K1723 participates in a covalent cross-link: Glycyl lysine isopeptide (Lys-Gly) (interchain with G-Cter in SUMO2). Phosphoserine is present on S1740.

As to quaternary structure, interacts with SETDB1.

It is found in the nucleus. Plays a role in the regulation of imprinted gene expression, regulates repressive epigenetic modifications associated with SETDB1. Required for the recruitment or accumulation of SETDB1 to the endogenous retroviruses (ERVs) and maintenance of repressive chromatin configuration, contributing to a subset of the SETDB1-dependent ERV silencing in embryonic stem cells. The sequence is that of Retroelement silencing factor 1 from Homo sapiens (Human).